The following is a 103-amino-acid chain: Large ribosomal subunit protein uL24 (103 aa).

A disordered region spans residues Tyr-70–Asn-103.

This sequence belongs to the universal ribosomal protein uL24 family. As to quaternary structure, part of the 50S ribosomal subunit.

In terms of biological role, one of two assembly initiator proteins, it binds directly to the 5'-end of the 23S rRNA, where it nucleates assembly of the 50S subunit. One of the proteins that surrounds the polypeptide exit tunnel on the outside of the subunit. This Lactiplantibacillus plantarum (strain ATCC BAA-793 / NCIMB 8826 / WCFS1) (Lactobacillus plantarum) protein is Large ribosomal subunit protein uL24.